The primary structure comprises 273 residues: Large ribosomal subunit protein uL2 (273 aa).

Disordered stretches follow at residues 30-50 (YAPLLDTKSKTGGRNNFGRIT) and 221-273 (RGTA…RRGK). Positions 253-273 (KGKKTRHNKRTDKFIVRRRGK) are enriched in basic residues.

The protein belongs to the universal ribosomal protein uL2 family. As to quaternary structure, part of the 50S ribosomal subunit. Forms a bridge to the 30S subunit in the 70S ribosome.

Its function is as follows. One of the primary rRNA binding proteins. Required for association of the 30S and 50S subunits to form the 70S ribosome, for tRNA binding and peptide bond formation. It has been suggested to have peptidyltransferase activity; this is somewhat controversial. Makes several contacts with the 16S rRNA in the 70S ribosome. This chain is Large ribosomal subunit protein uL2, found in Pasteurella multocida (strain Pm70).